Here is a 376-residue protein sequence, read N- to C-terminus: uncharacterized protein (376 aa).

This sequence belongs to the mimivirus R1 family.

This is an uncharacterized protein from Acanthamoeba polyphaga mimivirus (APMV).